Here is a 757-residue protein sequence, read N- to C-terminus: Kin of IRRE-like protein 1 (757 aa).

Residues 1–16 form the signal peptide; the sequence is MLSLLVWILTLSDTFS. Residues 17–499 lie on the Extracellular side of the membrane; that stretch reads QGTQTRFSQE…REVLPVGIIA (483 aa). Ig-like C2-type domains lie at 21-115, 120-216, 223-299, 308-387, and 392-488; these read TRFS…AKLT, PEDT…TSIE, PTVT…TNVS, PRIV…EVPL, and PPII…IQLE. Cys-42 and Cys-100 are oxidised to a cystine. N-linked (GlcNAc...) asparagine glycosylation is found at Asn-46 and Asn-140. Intrachain disulfides connect Cys-143/Cys-200 and Cys-244/Cys-287. The N-linked (GlcNAc...) asparagine glycan is linked to Asn-297. Cysteines 329 and 371 form a disulfide. Positions 405 to 407 match the Cell attachment site motif; it reads RGD. Cys-413 and Cys-472 are joined by a disulfide. Asn-471 is a glycosylation site (N-linked (GlcNAc...) asparagine). A helical transmembrane segment spans residues 500–520; sequence GATIGASILLIFFFIALVFFL. Topologically, residues 521–757 are cytoplasmic; that stretch reads YRRRKGSRKD…RFQQRMQTHV (237 aa). The residue at position 574 (Ser-574) is a Phosphoserine. Tyr-605 and Tyr-606 each carry phosphotyrosine; by FYN. Phosphotyrosine occurs at positions 622 and 625. Residues 649 to 679 form a disordered region; the sequence is QLNTYSRGPASDYGPEPTPPGPAAPAGTDTT. At Tyr-724 the chain carries Phosphotyrosine.

Belongs to the immunoglobulin superfamily. Interacts with TJP1/ZO-1 and with NPHS2/podocin (via the C-terminus). Interacts with NPHS1/nephrin (via the Ig-like domains); this interaction is dependent on KIRREL1 glycosylation. Homodimer (via the Ig-like domains). Interacts when tyrosine-phosphorylated with GRB2. Phosphorylation probably regulates the interaction with NSH2. Phosphorylated at Tyr-605 and Tyr-606 by FYN, leading to GRB2 binding. In terms of processing, N-glycosylated. As to expression, abundantly expressed in kidney. Specifically expressed in podocytes of kidney glomeruli.

It is found in the cell membrane. Functionally, required for proper function of the glomerular filtration barrier. It is involved in the maintenance of a stable podocyte architecture with interdigitating foot processes connected by specialized cell-cell junctions, known as the slit diaphragm. It is a signaling protein that needs the presence of TEC kinases to fully trans-activate the transcription factor AP-1. This is Kin of IRRE-like protein 1 from Homo sapiens (Human).